A 500-amino-acid chain; its full sequence is NAD(P)H-quinone oxidoreductase chain 4, chloroplastic (500 aa).

14 consecutive transmembrane segments (helical) span residues 4 to 24, 35 to 55, 87 to 107, 134 to 154, 167 to 187, 208 to 228, 242 to 262, 272 to 292, 305 to 325, 330 to 350, 364 to 384, 386 to 406, 416 to 436, and 462 to 482; these read FPWL…LFFL, YTLC…CYHF, FGPI…AWPV, LLLF…LLSM, FILY…GIGL, ALEI…SPII, HYST…YGLV, AHSI…VYAA, IAYS…SITD, GALL…FLAG, MGGM…LSMA, LALP…GIIT, ILIT…SLSM, and LFVS…PDFL.

Belongs to the complex I subunit 4 family.

It is found in the plastid. It localises to the chloroplast thylakoid membrane. The enzyme catalyses a plastoquinone + NADH + (n+1) H(+)(in) = a plastoquinol + NAD(+) + n H(+)(out). The catalysed reaction is a plastoquinone + NADPH + (n+1) H(+)(in) = a plastoquinol + NADP(+) + n H(+)(out). The sequence is that of NAD(P)H-quinone oxidoreductase chain 4, chloroplastic from Pelargonium hortorum (Common geranium).